The primary structure comprises 153 residues: Superoxide dismutase [Cu-Zn] (153 aa).

Histidine 45, histidine 47, and histidine 62 together coordinate Cu cation. A disulfide bridge links cysteine 56 with cysteine 145. Positions 62, 70, 79, and 82 each coordinate Zn(2+). Residue histidine 119 coordinates Cu cation.

It belongs to the Cu-Zn superoxide dismutase family. In terms of assembly, homodimer. It depends on Cu cation as a cofactor. Zn(2+) is required as a cofactor.

The protein resides in the cytoplasm. The enzyme catalyses 2 superoxide + 2 H(+) = H2O2 + O2. Functionally, destroys radicals which are normally produced within the cells and which are toxic to biological systems. The protein is Superoxide dismutase [Cu-Zn] of Ceratitis capitata (Mediterranean fruit fly).